A 99-amino-acid chain; its full sequence is Malonate decarboxylase acyl carrier protein (99 aa).

Residue serine 25 is modified to O-(phosphoribosyl dephospho-coenzyme A)serine.

The protein belongs to the MdcC family. In terms of processing, covalently binds the prosthetic group of malonate decarboxylase.

The protein resides in the cytoplasm. Functionally, subunit of malonate decarboxylase, it is an acyl carrier protein to which acetyl and malonyl thioester residues are bound via a 2'-(5''-phosphoribosyl)-3'-dephospho-CoA prosthetic group and turn over during the catalytic mechanism. This chain is Malonate decarboxylase acyl carrier protein, found in Pseudomonas fluorescens (strain Pf0-1).